Consider the following 346-residue polypeptide: [LysW]-lysine/[LysW]-ornithine hydrolase (346 aa).

His68 serves as a coordination point for Zn(2+). Residue Asp70 is part of the active site. Asp92 contacts Zn(2+). Residue Glu122 is the Proton acceptor of the active site. Zn(2+)-binding residues include Glu123, Glu146, and His317.

It belongs to the peptidase M20A family. LysK subfamily. Zn(2+) serves as cofactor. The cofactor is Co(2+).

The protein localises to the cytoplasm. The enzyme catalyses [amino-group carrier protein]-C-terminal-gamma-(L-lysyl)-L-glutamate + H2O = [amino-group carrier protein]-C-terminal-L-glutamate + L-lysine. It carries out the reaction [amino-group carrier protein]-C-terminal-gamma-(L-ornithyl)-L-glutamate + H2O = [amino-group carrier protein]-C-terminal-L-glutamate + L-ornithine. It participates in amino-acid biosynthesis; L-lysine biosynthesis via AAA pathway; L-lysine from L-alpha-aminoadipate (Thermus route): step 5/5. It functions in the pathway amino-acid biosynthesis; L-arginine biosynthesis. Functionally, catalyzes the release of L-lysine from [LysW]-gamma-L-lysine and the release of L-ornithine from [LysW]-L-ornithine. The polypeptide is [LysW]-lysine/[LysW]-ornithine hydrolase (Saccharolobus islandicus (strain M.16.27) (Sulfolobus islandicus)).